The following is a 615-amino-acid chain: Putative DNA ligase 205R (615 aa).

Lys-101 acts as the N6-AMP-lysine intermediate in catalysis.

It belongs to the NAD-dependent DNA ligase family.

It carries out the reaction NAD(+) + (deoxyribonucleotide)n-3'-hydroxyl + 5'-phospho-(deoxyribonucleotide)m = (deoxyribonucleotide)n+m + AMP + beta-nicotinamide D-nucleotide.. Catalyzes the formation of phosphodiester linkages between 5'-phosphoryl and 3'-hydroxyl groups in double-stranded DNA using NAD as a coenzyme and as the energy source for the reaction. This chain is Putative DNA ligase 205R, found in Invertebrate iridescent virus 6 (IIV-6).